The following is a 258-amino-acid chain: Protein STAY-GREEN LIKE, chloroplastic (258 aa).

Belongs to the staygreen family. In terms of tissue distribution, strongly expressed in leaves, stems and panicles, and at lower levels in roots and seeds.

In terms of biological role, promotes chlorophyll degradation in leaves. May be involved in LHCI proteins degradation, regulating the balance between LHCI and LHCII. The polypeptide is Protein STAY-GREEN LIKE, chloroplastic (Oryza sativa subsp. japonica (Rice)).